The following is a 450-amino-acid chain: Pancreatic triacylglycerol lipase (450 aa).

Intrachain disulfides connect cysteine 4-cysteine 10, cysteine 91-cysteine 102, and cysteine 91-cysteine 104. The active-site Nucleophile is the serine 153. A glycan (N-linked (GlcNAc...) asparagine) is linked at asparagine 167. Residue aspartate 177 is the Charge relay system of the active site. Residues glutamate 188, arginine 191, aspartate 193, and aspartate 196 each coordinate Ca(2+). A disulfide bridge links cysteine 238 with cysteine 262. The active-site Charge relay system is histidine 264. Disulfide bonds link cysteine 286–cysteine 297, cysteine 300–cysteine 305, and cysteine 434–cysteine 450. In terms of domain architecture, PLAT spans 339–450 (WRYKVSVTLS…EEVLLTLNPC (112 aa)).

It belongs to the AB hydrolase superfamily. Lipase family. In terms of assembly, forms a 1:1 stoichiometric complex with (pro)colipase/CLPS.

The protein localises to the secreted. It catalyses the reaction a triacylglycerol + H2O = a diacylglycerol + a fatty acid + H(+). The enzyme catalyses 1,2,3-tributanoylglycerol + H2O = dibutanoylglycerol + butanoate + H(+). The catalysed reaction is 1,2,3-tri-(9Z-octadecenoyl)-glycerol + H2O = di-(9Z)-octadecenoylglycerol + (9Z)-octadecenoate + H(+). It carries out the reaction all-trans-retinyl hexadecanoate + H2O = all-trans-retinol + hexadecanoate + H(+). It catalyses the reaction 1,2-di-(9Z-octadecenoyl)-glycerol + H2O = (9Z-octadecenoyl)-glycerol + (9Z)-octadecenoate + H(+). Inhibited by bile salts, is reactivated by (pro)colipase/CLPS. In terms of biological role, plays an important role in fat metabolism. It preferentially splits the esters of long-chain fatty acids at positions 1 and 3, producing mainly 2-monoacylglycerol and free fatty acids, and shows considerably higher activity against insoluble emulsified substrates than against soluble ones. In Sus scrofa (Pig), this protein is Pancreatic triacylglycerol lipase (PNLIP).